A 1184-amino-acid polypeptide reads, in one-letter code: DNA polymerase III subunit alpha (1184 aa).

The protein belongs to the DNA polymerase type-C family. DnaE subfamily. The Pol III holoenzyme complex contains at least 10 different subunits organized into 3 functionally essential subassemblies: the Pol III core, the beta sliding clamp processivity factor and the clamp-loading complex. The Pol III core (subunits alpha, epsilon and theta) contains the polymerase and the 3'-5' exonuclease proofreading activities. The polymerase is tethered to the template via the dimeric beta sliding clamp processivity factor. The clamp loader (also called gamma complex) assembles the beta sliding clamp onto the primed template and plays a central role in the organization and communication at the replication fork. The clamp-loading complex contains delta, delta', psi and chi, and 3 copies of either or both of two different DnaX proteins, gamma and tau. The DNA replisome complex has a single clamp loader (3 tau and 1 each of delta, delta', psi and chi subunits) which binds 3 Pol III cores (1 core on the leading strand and 2 on the lagging strand) each with a beta sliding clamp dimer. Interacts with the beta-sliding clamp (DnaN). Co-immunoprecipitates with DarG in the presence and absence of darT.

Its subcellular location is the cytoplasm. It catalyses the reaction DNA(n) + a 2'-deoxyribonucleoside 5'-triphosphate = DNA(n+1) + diphosphate. In terms of biological role, DNA polymerase III is a complex, multichain enzyme responsible for most of the replicative synthesis in bacteria. Pol III also exhibits 3' to 5' exonuclease activity. The alpha chain is the DNA polymerase. The polypeptide is DNA polymerase III subunit alpha (dnaE1) (Mycobacterium tuberculosis (strain ATCC 25618 / H37Rv)).